A 341-amino-acid polypeptide reads, in one-letter code: tRNA N6-adenosine threonylcarbamoyltransferase (341 aa).

His-110 and His-114 together coordinate Fe cation. Residues 133–137, Asp-166, Gly-179, and Asn-276 each bind substrate; that span reads LVSGG. Asp-304 lines the Fe cation pocket.

This sequence belongs to the KAE1 / TsaD family. Requires Fe(2+) as cofactor.

The protein localises to the cytoplasm. It catalyses the reaction L-threonylcarbamoyladenylate + adenosine(37) in tRNA = N(6)-L-threonylcarbamoyladenosine(37) in tRNA + AMP + H(+). In terms of biological role, required for the formation of a threonylcarbamoyl group on adenosine at position 37 (t(6)A37) in tRNAs that read codons beginning with adenine. Is involved in the transfer of the threonylcarbamoyl moiety of threonylcarbamoyl-AMP (TC-AMP) to the N6 group of A37, together with TsaE and TsaB. TsaD likely plays a direct catalytic role in this reaction. This chain is tRNA N6-adenosine threonylcarbamoyltransferase, found in Saccharophagus degradans (strain 2-40 / ATCC 43961 / DSM 17024).